A 109-amino-acid chain; its full sequence is Set1 complex component sdc1 (109 aa).

The disordered stretch occupies residues 49–109; sequence QQKQKEIVNQ…SSNPGKNSAS (61 aa). Polar residues predominate over residues 73–87; that stretch reads STPTMAEQVQTSFSN. Residues 88-101 show a composition bias toward low complexity; the sequence is PASTPLTQTSSPSS.

This sequence belongs to the dpy-30 family. As to quaternary structure, component of the COMPASS (Set1C) complex composed of ash2, sdc1, set1, shg1, spp1, swd1, swd2 and swd3. Component of the Lid2 complex composed of ash2, jmj3, lid2, sdc1 and snt2.

It is found in the nucleus. Its function is as follows. The COMPASS (Set1C) complex specifically mono-, di- and trimethylates histone H3 to form H3K4me1/2/3, which subsequently activates gene expression by regulating transcription elongation and plays a role in telomere length maintenance. This Schizosaccharomyces pombe (strain 972 / ATCC 24843) (Fission yeast) protein is Set1 complex component sdc1 (sdc1).